Reading from the N-terminus, the 157-residue chain is Ubiquitin-like protein 4A (157 aa).

Positions 1-76 constitute a Ubiquitin-like domain; it reads MQLTVKALQG…LNLVVKPLEK (76 aa). A Glycyl lysine isopeptide (Lys-Gly) (interchain with G-Cter in ubiquitin) cross-link involves residue Lys48. At Ser90 the chain carries Phosphoserine. The interval 96 to 138 is required and sufficient for interaction with BAG6; that stretch reads WQLISKVLARHFSIGDASRVLEQLQRDYDRSLSRLTLDDIERL.

As to quaternary structure, component of the BAG6/BAT3 complex, at least composed of BAG6, UBL4A and GET4/TRC35. Interacts with BAG6; the interaction is direct and required for UBL4A protein stability. Interacts with USP13; may be indirect via BAG6. In terms of processing, polyubiquitinated. Ubiquitination by AMFR and deubiquitination by USP13 may regulate the interaction between the BAG6/BAT complex and SGTA and therefore may regulate client proteins fate.

Its subcellular location is the cytoplasm. The protein localises to the cytosol. It localises to the nucleus. Its function is as follows. As part of a cytosolic protein quality control complex, the BAG6/BAT3 complex, maintains misfolded and hydrophobic patches-containing proteins in a soluble state and participates in their proper delivery to the endoplasmic reticulum or alternatively can promote their sorting to the proteasome where they undergo degradation. The BAG6/BAT3 complex is involved in the post-translational delivery of tail-anchored/type II transmembrane proteins to the endoplasmic reticulum membrane. Recruited to ribosomes, it interacts with the transmembrane region of newly synthesized tail-anchored proteins and together with SGTA and ASNA1 mediates their delivery to the endoplasmic reticulum. Client proteins that cannot be properly delivered to the endoplasmic reticulum are ubiquitinated and sorted to the proteasome. Similarly, the BAG6/BAT3 complex also functions as a sorting platform for proteins of the secretory pathway that are mislocalized to the cytosol either delivering them to the proteasome for degradation or to the endoplasmic reticulum. The BAG6/BAT3 complex also plays a role in the endoplasmic reticulum-associated degradation (ERAD), a quality control mechanism that eliminates unwanted proteins of the endoplasmic reticulum through their retrotranslocation to the cytosol and their targeting to the proteasome. It maintains these retrotranslocated proteins in an unfolded yet soluble state condition in the cytosol to ensure their proper delivery to the proteasome. This chain is Ubiquitin-like protein 4A (Ubl4a), found in Rattus norvegicus (Rat).